The primary structure comprises 660 residues: Bifunctional polymyxin resistance protein ArnA (660 aa).

Positions 1 to 304 (MKTVVFAYHD…TLGLVQGSRL (304 aa)) are formyltransferase ArnAFT. 86–88 (HLI) lines the (6R)-10-formyltetrahydrofolate pocket. H104 serves as the catalytic Proton donor; for formyltransferase activity. (6R)-10-formyltetrahydrofolate-binding positions include R114 and 136-140 (VTRAD). Positions 314–660 (RRTRVLILGV…RTVDLTDKPS (347 aa)) are dehydrogenase ArnADH. NAD(+) contacts are provided by residues D347 and 368–369 (DI). UDP-alpha-D-glucuronate contacts are provided by residues A393, Y398, and 432–433 (TS). E434 serves as the catalytic Proton acceptor; for decarboxylase activity. UDP-alpha-D-glucuronate contacts are provided by residues R460, N492, 526–535 (KLIDGGKQKR), and Y613. Residue R619 is the Proton donor; for decarboxylase activity of the active site.

In the N-terminal section; belongs to the Fmt family. UDP-L-Ara4N formyltransferase subfamily. This sequence in the C-terminal section; belongs to the NAD(P)-dependent epimerase/dehydratase family. UDP-glucuronic acid decarboxylase subfamily. As to quaternary structure, homohexamer, formed by a dimer of trimers.

It catalyses the reaction UDP-alpha-D-glucuronate + NAD(+) = UDP-beta-L-threo-pentopyranos-4-ulose + CO2 + NADH. The enzyme catalyses UDP-4-amino-4-deoxy-beta-L-arabinose + (6R)-10-formyltetrahydrofolate = UDP-4-deoxy-4-formamido-beta-L-arabinose + (6S)-5,6,7,8-tetrahydrofolate + H(+). It participates in nucleotide-sugar biosynthesis; UDP-4-deoxy-4-formamido-beta-L-arabinose biosynthesis; UDP-4-deoxy-4-formamido-beta-L-arabinose from UDP-alpha-D-glucuronate: step 1/3. Its pathway is nucleotide-sugar biosynthesis; UDP-4-deoxy-4-formamido-beta-L-arabinose biosynthesis; UDP-4-deoxy-4-formamido-beta-L-arabinose from UDP-alpha-D-glucuronate: step 3/3. It functions in the pathway bacterial outer membrane biogenesis; lipopolysaccharide biosynthesis. Its function is as follows. Bifunctional enzyme that catalyzes the oxidative decarboxylation of UDP-glucuronic acid (UDP-GlcUA) to UDP-4-keto-arabinose (UDP-Ara4O) and the addition of a formyl group to UDP-4-amino-4-deoxy-L-arabinose (UDP-L-Ara4N) to form UDP-L-4-formamido-arabinose (UDP-L-Ara4FN). The modified arabinose is attached to lipid A and is required for resistance to polymyxin and cationic antimicrobial peptides. The polypeptide is Bifunctional polymyxin resistance protein ArnA (Shigella dysenteriae serotype 1 (strain Sd197)).